A 65-amino-acid polypeptide reads, in one-letter code: Small ribosomal subunit protein uS10 (65 aa).

It belongs to the universal ribosomal protein uS10 family. As to quaternary structure, part of the 30S ribosomal subunit.

In terms of biological role, involved in the binding of tRNA to the ribosomes. The polypeptide is Small ribosomal subunit protein uS10 (rps10) (Desulfurococcus mucosus (Desulfurococcus mobilis)).